We begin with the raw amino-acid sequence, 179 residues long: Probable protein archease (179 aa).

Positions 55, 178, and 179 each coordinate Ca(2+).

The protein belongs to the archease family.

Functionally, activates the tRNA-splicing ligase complex by facilitating the enzymatic turnover of catalytic subunit RtcB. Acts by promoting the guanylylation of RtcB, a key intermediate step in tRNA ligation. Can also alter the NTP specificity of RtcB such that ATP, dGTP or ITP is used efficiently. In Mycobacterium tuberculosis (strain CDC 1551 / Oshkosh), this protein is Probable protein archease.